Here is a 209-residue protein sequence, read N- to C-terminus: Orotate phosphoribosyltransferase (209 aa).

Residues Arg-96, Lys-100, His-102, and 122–130 contribute to the 5-phospho-alpha-D-ribose 1-diphosphate site; that span reads EDLISTGGS. Orotate is bound at residue Ser-126.

The protein belongs to the purine/pyrimidine phosphoribosyltransferase family. PyrE subfamily. As to quaternary structure, homodimer. Requires Mg(2+) as cofactor.

It carries out the reaction orotidine 5'-phosphate + diphosphate = orotate + 5-phospho-alpha-D-ribose 1-diphosphate. It functions in the pathway pyrimidine metabolism; UMP biosynthesis via de novo pathway; UMP from orotate: step 1/2. Its function is as follows. Catalyzes the transfer of a ribosyl phosphate group from 5-phosphoribose 1-diphosphate to orotate, leading to the formation of orotidine monophosphate (OMP). This chain is Orotate phosphoribosyltransferase, found in Streptococcus thermophilus (strain ATCC BAA-491 / LMD-9).